The sequence spans 470 residues: Cysteine--tRNA ligase 1 (470 aa).

Cysteine 29 lines the Zn(2+) pocket. Residues 31–41 (PTVYDDAHIGN) carry the 'HIGH' region motif. Zn(2+)-binding residues include cysteine 221, histidine 246, and glutamate 250. The 'KMSKS' region motif lies at 279–283 (KMSKS). Lysine 282 provides a ligand contact to ATP.

This sequence belongs to the class-I aminoacyl-tRNA synthetase family. Monomer. Requires Zn(2+) as cofactor.

Its subcellular location is the cytoplasm. The catalysed reaction is tRNA(Cys) + L-cysteine + ATP = L-cysteinyl-tRNA(Cys) + AMP + diphosphate. This chain is Cysteine--tRNA ligase 1, found in Burkholderia lata (strain ATCC 17760 / DSM 23089 / LMG 22485 / NCIMB 9086 / R18194 / 383).